Reading from the N-terminus, the 436-residue chain is MHIVVVGLSHRTAPVEVREKLSIPDQSITKSLKALKAFSEVLEVSILSTCNRLEIYALVKDKNTGISSIKEFISDYSGIIFEDLNPHLFCFRQEDAVLHLMKVSAGLDSLVLGEGQILSQVKKMMRLGQENQSTGPILNRLLTQSVSTGKKVRSETNLGTGAVSISSAAVELAQLKIGQEKGFDTLVSLESEKVLVVGAGRMSRLLITHLKAKGCHKLILVNRNIDRALNLAIDFPDIEIVCKGLNELDENISISSLVFTSTASEEPIIDLAKIEKLNLNNKLKFIDIGVPRNISNDVKNHQFVKSFDVDDLQEVVSRNQEFRQKIAKEAESLVEEERIIFLEWWASLEAVPVINKLRSDLELIRKEELQKALSRMGPDFSARERKVVEALTKGIINKILHTPVTKLRSPQSREERQASLKIVEKLFSLVDEDKNS.

Substrate contacts are provided by residues 49–52 (TCNR), S109, 114–116 (EGQ), and Q120. The active-site Nucleophile is C50. 198 to 203 (GAGRMS) is a binding site for NADP(+).

The protein belongs to the glutamyl-tRNA reductase family. As to quaternary structure, homodimer.

The catalysed reaction is (S)-4-amino-5-oxopentanoate + tRNA(Glu) + NADP(+) = L-glutamyl-tRNA(Glu) + NADPH + H(+). The protein operates within porphyrin-containing compound metabolism; protoporphyrin-IX biosynthesis; 5-aminolevulinate from L-glutamyl-tRNA(Glu): step 1/2. It functions in the pathway porphyrin-containing compound metabolism; chlorophyll biosynthesis. Its function is as follows. Catalyzes the NADPH-dependent reduction of glutamyl-tRNA(Glu) to glutamate 1-semialdehyde (GSA). The protein is Glutamyl-tRNA reductase of Prochlorococcus marinus (strain MIT 9312).